The chain runs to 138 residues: Drosulfakinins (138 aa).

Positions 1 to 33 are cleaved as a signal peptide; sequence MGLRSCTHFATLVMPLWALAFCFLVLVPVPAQT. Residues 34–73 constitute a propeptide that is removed on maturation; the sequence is TSLQISKGDRRLQDLESNMGAESDQPNANLVGTSLSRFGD. Residue Phe-82 is modified to Phenylalanine amide. A propeptide spanning residues 86 to 108 is cleaved from the precursor; the sequence is VPRPIIPIELDLLMDNDDENTKA. Tyr-114 carries the sulfotyrosine modification. Phe-119 bears the Phenylalanine amide mark. Tyr-131 is subject to Sulfotyrosine. Position 136 is a phenylalanine amide (Phe-136).

Belongs to the gastrin/cholecystokinin family.

The protein localises to the secreted. Functionally, drosulfakinin-0 (DSK 0) plays diverse biological roles including regulating gut muscle contraction in adults but not in larvae. This is Drosulfakinins from Drosophila teissieri (Fruit fly).